The sequence spans 638 residues: Chaperone protein HtpG (638 aa).

Residues 1–345 (MTTETFEFQV…AQDLSLNVSR (345 aa)) are a; substrate-binding. Positions 346 to 560 (EILQQDRHIR…AGELTPALEN (215 aa)) are b. The tract at residues 561–638 (MYRAMGQEVP…LMADRLERTL (78 aa)) is c.

It belongs to the heat shock protein 90 family. Homodimer.

The protein resides in the cytoplasm. In terms of biological role, molecular chaperone. Has ATPase activity. The protein is Chaperone protein HtpG of Streptomyces coelicolor (strain ATCC BAA-471 / A3(2) / M145).